The following is a 277-amino-acid chain: uncharacterized protein (277 aa).

The tract at residues 256 to 277 (HTTTTTTSPSFTIPSNSSKGVS) is disordered.

This protein may be involved in virus assembly. Essential for virus function. This is an uncharacterized protein from Saccharolobus solfataricus (Sulfolobus solfataricus).